Consider the following 176-residue polypeptide: ATP synthase subunit delta (176 aa).

It belongs to the ATPase delta chain family. As to quaternary structure, F-type ATPases have 2 components, F(1) - the catalytic core - and F(0) - the membrane proton channel. F(1) has five subunits: alpha(3), beta(3), gamma(1), delta(1), epsilon(1). F(0) has three main subunits: a(1), b(2) and c(10-14). The alpha and beta chains form an alternating ring which encloses part of the gamma chain. F(1) is attached to F(0) by a central stalk formed by the gamma and epsilon chains, while a peripheral stalk is formed by the delta and b chains.

It is found in the cell membrane. Functionally, f(1)F(0) ATP synthase produces ATP from ADP in the presence of a proton or sodium gradient. F-type ATPases consist of two structural domains, F(1) containing the extramembraneous catalytic core and F(0) containing the membrane proton channel, linked together by a central stalk and a peripheral stalk. During catalysis, ATP synthesis in the catalytic domain of F(1) is coupled via a rotary mechanism of the central stalk subunits to proton translocation. This protein is part of the stalk that links CF(0) to CF(1). It either transmits conformational changes from CF(0) to CF(1) or is implicated in proton conduction. This is ATP synthase subunit delta from Wigglesworthia glossinidia brevipalpis.